The primary structure comprises 393 residues: Metal tolerance protein A2 (393 aa).

Topologically, residues 1–72 (MVTPKLHLDL…EAQERAASMR (72 aa)) are cytoplasmic. Residues 73–93 (KLLIAVLLCAIFIVVEVVGGI) form a helical membrane-spanning segment. Residues 94 to 105 (KANSLAILTDAA) lie on the Vacuolar side of the membrane. Residues 106–126 (HLLSDVAAFAISLFSLWASGW) traverse the membrane as a helical segment. Residues 127–138 (KANPQQSYGFFR) are Cytoplasmic-facing. The chain crosses the membrane as a helical span at residues 139 to 159 (IEILGALVSIQMIWLLAGILV). At 160–176 (YEAIVRLNNGSGEVEGS) the chain is on the vacuolar side. The chain crosses the membrane as a helical span at residues 177-197 (LMFAVSAVGLLVNIAMAILLG). The tract at residues 198–233 (HDHGHGHGHSHDNGHGHSHDHGHGIAATEHHHDSGH) is required for zinc-binding. Residues 198 to 257 (HDHGHGHGHSHDNGHGHSHDHGHGIAATEHHHDSGHDESQLSDVLIEQKKQRNVNIQGAY) are Cytoplasmic-facing. A compositionally biased stretch (basic and acidic residues) spans 202–236 (HGHGHSHDNGHGHSHDHGHGIAATEHHHDSGHDES). The disordered stretch occupies residues 202–237 (HGHGHSHDNGHGHSHDHGHGIAATEHHHDSGHDESQ). The chain crosses the membrane as a helical span at residues 258–278 (LHVLGDSIQSVGVMIGGAIIW). Residues 279-284 (YKPEWK) lie on the Vacuolar side of the membrane. A helical transmembrane segment spans residues 285 to 305 (ILDLICTLVFSVIVLGTTIGM). Residues 306 to 393 (LRNILEVLME…SHVTIQIERQ (88 aa)) lie on the Cytoplasmic side of the membrane.

The protein belongs to the cation diffusion facilitator (CDF) transporter (TC 2.A.4) family. SLC30A subfamily.

It localises to the membrane. Its function is as follows. Involved in sequestration of excess zinc in the cytoplasm into vacuoles to maintain zinc homeostasis. This Arabidopsis thaliana (Mouse-ear cress) protein is Metal tolerance protein A2 (MTPA2).